The primary structure comprises 206 residues: Glycerol-3-phosphate acyltransferase (206 aa).

The next 5 membrane-spanning stretches (helical) occupy residues 3 to 23 (LSLI…VIIG), 47 to 67 (VLGP…GTLA), 79 to 99 (HSLV…SIFL), 119 to 139 (PLFF…TSMV), and 152 to 172 (ILSF…VLIF).

The protein belongs to the PlsY family. Probably interacts with PlsX.

The protein resides in the cell membrane. The catalysed reaction is an acyl phosphate + sn-glycerol 3-phosphate = a 1-acyl-sn-glycero-3-phosphate + phosphate. The protein operates within lipid metabolism; phospholipid metabolism. Functionally, catalyzes the transfer of an acyl group from acyl-phosphate (acyl-PO(4)) to glycerol-3-phosphate (G3P) to form lysophosphatidic acid (LPA). This enzyme utilizes acyl-phosphate as fatty acyl donor, but not acyl-CoA or acyl-ACP. The protein is Glycerol-3-phosphate acyltransferase of Latilactobacillus sakei subsp. sakei (strain 23K) (Lactobacillus sakei subsp. sakei).